Consider the following 94-residue polypeptide: Large ribosomal subunit protein eL42 (94 aa).

Zn(2+) is bound by residues C11, C14, C71, and C74. The C4-type zinc finger occupies 11 to 74; the sequence is CPYCKRHTIH…LDLRFVCTVC (64 aa).

This sequence belongs to the eukaryotic ribosomal protein eL42 family. Part of the 50S ribosomal subunit. Zn(2+) is required as a cofactor.

Functionally, binds to the 23S rRNA. The chain is Large ribosomal subunit protein eL42 from Pyrococcus horikoshii (strain ATCC 700860 / DSM 12428 / JCM 9974 / NBRC 100139 / OT-3).